The chain runs to 150 residues: Large ribosomal subunit protein bL9 (150 aa).

The protein belongs to the bacterial ribosomal protein bL9 family.

Binds to the 23S rRNA. This chain is Large ribosomal subunit protein bL9, found in Streptococcus pyogenes serotype M5 (strain Manfredo).